The primary structure comprises 1049 residues: Exotoxin PaxA (1049 aa).

4 helical membrane-spanning segments follow: residues 246 to 266 (GLGLDIISSLLSGVTASFTLA), 311 to 331 (GPAAALIASSISLAISPLSFL), 375 to 395 (ITTISTALSAIAAGTAAASAG), and 397 to 417 (LVGAPITLLVTGITGLISGIL). Hemolysin-type calcium-binding repeat units lie at residues 744 to 761 (KGSKFRDIFHGADGDDLL), 762 to 779 (NGNDGDDILYGDKGNDEL), 780 to 797 (RGDNGNDQLYGGEGNDKL), 798 to 815 (FGGNGNNYLSGGDGDDEL), 826 to 843 (RGGKGNDKLYGGAGSDFL), and 844 to 861 (DGGEGDDYLAGGEGNDFY).

It belongs to the RTX prokaryotic toxin (TC 1.C.11) family.

The protein localises to the secreted. It localises to the host cell membrane. Its function is as follows. PaxA is associated with abortion cases in swine and septicemia in young piglets. Shows cohemolytic activity with the sphingomyelinase of S.aureus but is devoid of direct hemolytic activity. The protein is Exotoxin PaxA (paxA) of Pasteurella aerogenes.